A 150-amino-acid polypeptide reads, in one-letter code: Flagellar assembly factor FliW (150 aa).

The protein belongs to the FliW family. Interacts with translational regulator CsrA and flagellin(s).

It is found in the cytoplasm. In terms of biological role, acts as an anti-CsrA protein, binds CsrA and prevents it from repressing translation of its target genes, one of which is flagellin. Binds to flagellin and participates in the assembly of the flagellum. This Thermoanaerobacter pseudethanolicus (strain ATCC 33223 / 39E) (Clostridium thermohydrosulfuricum) protein is Flagellar assembly factor FliW.